Consider the following 291-residue polypeptide: Ribosomal RNA small subunit methyltransferase A (291 aa).

The S-adenosyl-L-methionine site is built by Asn28, Leu30, Gly55, Glu77, Asp103, and Asn123.

Belongs to the class I-like SAM-binding methyltransferase superfamily. rRNA adenine N(6)-methyltransferase family. RsmA subfamily.

The protein resides in the cytoplasm. The enzyme catalyses adenosine(1518)/adenosine(1519) in 16S rRNA + 4 S-adenosyl-L-methionine = N(6)-dimethyladenosine(1518)/N(6)-dimethyladenosine(1519) in 16S rRNA + 4 S-adenosyl-L-homocysteine + 4 H(+). In terms of biological role, specifically dimethylates two adjacent adenosines (A1518 and A1519) in the loop of a conserved hairpin near the 3'-end of 16S rRNA in the 30S particle. May play a critical role in biogenesis of 30S subunits. In Azorhizobium caulinodans (strain ATCC 43989 / DSM 5975 / JCM 20966 / LMG 6465 / NBRC 14845 / NCIMB 13405 / ORS 571), this protein is Ribosomal RNA small subunit methyltransferase A.